A 205-amino-acid chain; its full sequence is Holliday junction branch migration complex subunit RuvA (205 aa).

The domain I stretch occupies residues 1-64; sequence MIGKLKGVVD…EDMIRLYGFR (64 aa). A domain II region spans residues 65–143; the sequence is SDAEREWFRL…AFAPVDPALV (79 aa). Residues 144 to 152 are flexible linker; it reads RLAGAVEAR. Residues 153 to 205 form a domain III region; it reads TAPQPVADAISALVNLGYPQAQASAAVAAALQSAGAEAEAKTLIRLGLRELAR.

Belongs to the RuvA family. In terms of assembly, homotetramer. Forms an RuvA(8)-RuvB(12)-Holliday junction (HJ) complex. HJ DNA is sandwiched between 2 RuvA tetramers; dsDNA enters through RuvA and exits via RuvB. An RuvB hexamer assembles on each DNA strand where it exits the tetramer. Each RuvB hexamer is contacted by two RuvA subunits (via domain III) on 2 adjacent RuvB subunits; this complex drives branch migration. In the full resolvosome a probable DNA-RuvA(4)-RuvB(12)-RuvC(2) complex forms which resolves the HJ.

The protein resides in the cytoplasm. Its function is as follows. The RuvA-RuvB-RuvC complex processes Holliday junction (HJ) DNA during genetic recombination and DNA repair, while the RuvA-RuvB complex plays an important role in the rescue of blocked DNA replication forks via replication fork reversal (RFR). RuvA specifically binds to HJ cruciform DNA, conferring on it an open structure. The RuvB hexamer acts as an ATP-dependent pump, pulling dsDNA into and through the RuvAB complex. HJ branch migration allows RuvC to scan DNA until it finds its consensus sequence, where it cleaves and resolves the cruciform DNA. The protein is Holliday junction branch migration complex subunit RuvA of Methylobacterium sp. (strain 4-46).